The sequence spans 137 residues: Ribonuclease VapC3 (137 aa).

The PINc domain occupies 12 to 129 (VVVDASAMVD…LTTDERLARA (118 aa)). Residues Asp-15 and Asp-105 each coordinate Mg(2+).

It belongs to the PINc/VapC protein family. The cofactor is Mg(2+).

Functionally, toxic component of a type II toxin-antitoxin (TA) system. An RNase. Its toxic effect is neutralized by coexpression with cognate antitoxin VapB3. This chain is Ribonuclease VapC3, found in Mycobacterium tuberculosis (strain CDC 1551 / Oshkosh).